We begin with the raw amino-acid sequence, 142 residues long: Hemoglobin subunit alpha-A (142 aa).

In terms of domain architecture, Globin spans 2-142 (VLSAADKTNV…VATVLTAKYR (141 aa)). Histidine 59 contributes to the O2 binding site. Residue histidine 88 participates in heme b binding.

The protein belongs to the globin family. As to quaternary structure, heterotetramer of two alpha chains and two beta chains. In terms of tissue distribution, red blood cells.

Its function is as follows. Involved in oxygen transport from the lung to the various peripheral tissues. The sequence is that of Hemoglobin subunit alpha-A (HBAA) from Apus apus (Common swift).